A 1829-amino-acid chain; its full sequence is Unconventional myosin-Va (1829 aa).

The 53-residue stretch at 8-60 (TKYARVWIPDPEEVWKSAELLKDYKPGDKVLQLRLEEGKDLEYCLDPKTKELP) folds into the Myosin N-terminal SH3-like domain. The Myosin motor domain maps to 69–764 (VGENDLTALS…QVAYLEKIRA (696 aa)). 163-170 (GESGAGKT) lines the ATP pocket. Positions 599–635 (AISPTSATPSGRVPLSRTPVKPAKARPGQTSKEHKKT) are disordered. An actin-binding region spans residues 644 to 666 (LHLLMETLNATTPHYVRCIKPND). IQ domains are found at residues 767 to 789 (LRAA…KYMR), 790 to 814 (MRRA…TFLR), 815 to 837 (RTRA…RYQC), 838 to 862 (MRDA…QMML), 863 to 887 (REHK…HRTL), and 888 to 915 (KAIV…EARS). 2 coiled-coil regions span residues 916–1239 (VERY…PEVT) and 1315–1419 (GLKE…ELEV). Disordered regions lie at residues 1106-1148 (IPKP…SEKK) and 1170-1199 (KQSL…PIRG). Polar residues predominate over residues 1117 to 1131 (THSSNESEYTFSSEI). Basic and acidic residues-rich tracts occupy residues 1137 to 1148 (LPLRMEEPSEKK) and 1170 to 1196 (KQSL…ERPP). The Dilute domain maps to 1508–1784 (TSTINGIKKV…IRTIQLRLRD (277 aa)). T1734 bears the Phosphothreonine mark.

The protein belongs to the TRAFAC class myosin-kinesin ATPase superfamily. Myosin family. May be a homodimer, which associates with multiple calmodulin or myosin light chains. Neuronal and non-neuronal cells of the brain.

Its subcellular location is the golgi apparatus membrane. The enzyme catalyses ATP + H2O = ADP + phosphate + H(+). In terms of biological role, processive actin-based motor that can move in large steps approximating the 36-nm pseudo-repeat of the actin filament. Can hydrolyze ATP in the presence of actin, which is essential for its function as a motor protein. Involved in melanosome transport. Also mediates the transport of vesicles to the plasma membrane. May also be required for some polarization process involved in dendrite formation. In Gallus gallus (Chicken), this protein is Unconventional myosin-Va (MYO5A).